The chain runs to 180 residues: Prothoracicotropic hormone (180 aa).

An N-terminal signal peptide occupies residues 1–15 (MKLLILCVMVHGLLA). Positions 16-64 (EGPGQVLWKEQVVAPEFLLDDREDIASNRNAFFYEDKRSFRPEGLGEQV) are excised as a propeptide. Cystine bridges form between Cys-88–Cys-123 and Cys-111–Cys-175.

As to quaternary structure, homodimer; disulfide-linked.

Its subcellular location is the secreted. Its function is as follows. PTTH is a brain secretory polypeptide of insects which stimulates the prothoracic glands to produce and release ecdysone, the steroid essential to insect development. The protein is Prothoracicotropic hormone of Camponotus floridanus (Florida carpenter ant).